A 304-amino-acid chain; its full sequence is Putative dihydroorotate dehydrogenase A (fumarate) (304 aa).

FMN is bound by residues S22 and 46 to 47 (KG). Substrate-binding positions include K46 and 70–74 (NSVGL). FMN is bound by residues N100 and N128. A substrate-binding site is contributed by N128. C131 acts as the Nucleophile in catalysis. FMN-binding residues include K166 and V192. 193–194 (NT) serves as a coordination point for substrate. FMN-binding positions include G218, 244 to 245 (GG), and 266 to 267 (GT).

The protein belongs to the dihydroorotate dehydrogenase family. Type 1 subfamily. Homodimer. FMN is required as a cofactor.

The protein resides in the cytoplasm. The catalysed reaction is (S)-dihydroorotate + fumarate = orotate + succinate. Its pathway is pyrimidine metabolism; UMP biosynthesis via de novo pathway. Its function is as follows. Catalyzes the conversion of dihydroorotate to orotate with fumarate as the electron acceptor. The polypeptide is Putative dihydroorotate dehydrogenase A (fumarate) (pyrD) (Solibacter usitatus (strain Ellin6076)).